The following is a 149-amino-acid chain: Ribonuclease H (149 aa).

One can recognise an RNase H type-1 domain in the interval M1–T141. Positions 9, 47, 69, and 133 each coordinate Mg(2+).

Belongs to the RNase H family. Monomer. Mg(2+) is required as a cofactor.

It is found in the cytoplasm. It catalyses the reaction Endonucleolytic cleavage to 5'-phosphomonoester.. Endonuclease that specifically degrades the RNA of RNA-DNA hybrids. This Campylobacter curvus (strain 525.92) protein is Ribonuclease H.